Here is a 362-residue protein sequence, read N- to C-terminus: 3-isopropylmalate dehydrogenase (362 aa).

An NAD(+)-binding site is contributed by Gly-76–Glu-87. Substrate is bound by residues Arg-94, Arg-104, Arg-133, and Asp-222. 3 residues coordinate Mg(2+): Asp-222, Asp-247, and Asp-251. NAD(+) is bound at residue Gly-286–Asn-297.

It belongs to the isocitrate and isopropylmalate dehydrogenases family. Homodimer. Mg(2+) is required as a cofactor. Mn(2+) serves as cofactor.

The protein localises to the cytoplasm. The enzyme catalyses (2R,3S)-3-isopropylmalate + NAD(+) = 4-methyl-2-oxopentanoate + CO2 + NADH. The protein operates within amino-acid biosynthesis; L-leucine biosynthesis; L-leucine from 3-methyl-2-oxobutanoate: step 3/4. Functionally, catalyzes the oxidation of 3-carboxy-2-hydroxy-4-methylpentanoate (3-isopropylmalate) to 3-carboxy-4-methyl-2-oxopentanoate. The product decarboxylates to 4-methyl-2 oxopentanoate. The sequence is that of 3-isopropylmalate dehydrogenase (LEU2) from Pichia angusta (Yeast).